The primary structure comprises 1378 residues: DNA-directed RNA polymerase subunit beta (1378 aa).

It belongs to the RNA polymerase beta chain family. As to quaternary structure, the RNAP catalytic core consists of 2 alpha, 1 beta, 1 beta' and 1 omega subunit. When a sigma factor is associated with the core the holoenzyme is formed, which can initiate transcription.

It carries out the reaction RNA(n) + a ribonucleoside 5'-triphosphate = RNA(n+1) + diphosphate. Its function is as follows. DNA-dependent RNA polymerase catalyzes the transcription of DNA into RNA using the four ribonucleoside triphosphates as substrates. The polypeptide is DNA-directed RNA polymerase subunit beta (Hyphomonas neptunium (strain ATCC 15444)).